Here is a 202-residue protein sequence, read N- to C-terminus: UPF0301 protein Meso_0753 (202 aa).

Belongs to the UPF0301 (AlgH) family.

The polypeptide is UPF0301 protein Meso_0753 (Chelativorans sp. (strain BNC1)).